We begin with the raw amino-acid sequence, 94 residues long: MRTLTLLTALLLLALHTQAKSPQGTAEEAPDQEQLVMEDQDISISFGGDKGTALQDADVKAGVTCYCRRTRCGFRERLSGACGYRGRIYRLCCR.

Residues 1-19 (MRTLTLLTALLLLALHTQA) form the signal peptide. Residues 20–62 (KSPQGTAEEAPDQEQLVMEDQDISISFGGDKGTALQDADVKAG) constitute a propeptide that is removed on maturation. 3 disulfide bridges follow: Cys-65/Cys-93, Cys-67/Cys-82, and Cys-72/Cys-92. At Tyr-84 the chain carries Phosphotyrosine.

Belongs to the alpha-defensin family. In terms of tissue distribution, highest expression in bone marrow and to a much lesser extent in small intestine.

It is found in the secreted. Active in vitro against S.aureus, fungi, Gram-positive and Gram-negative bacteria and to a lesser extent against an enveloped virus. This is Neutrophil antibiotic peptide NP-1 from Rattus norvegicus (Rat).